A 391-amino-acid polypeptide reads, in one-letter code: E3 ubiquitin-protein ligase RMND5A (391 aa).

An N-acetylmethionine modification is found at methionine 1. The region spanning 114–146 (SQRLLNEVMVEHFFRQGMLDVAEELCQESGLSV) is the LisH domain. Positions 153 to 210 (PFVELNRILEALKVRVLRPALEWAVSNREMLIAQNSSLEFKLHRLYFISLLMGGTTNQ) constitute a CTLH domain. The RING-Gid-type zinc finger occupies 336–377 (CPILRQQTTDNNPPMKLVCGHIISRDALNKMFNGSKLKCPYC).

As to quaternary structure, identified in the CTLH complex that contains GID4, RANBP9 and/or RANBP10, MKLN1, MAEA, RMND5A (or alternatively its paralog RMND5B), GID8, ARMC8, WDR26 and YPEL5. Within this complex, MAEA, RMND5A (or alternatively its paralog RMND5B), GID8, WDR26, and RANBP9 and/or RANBP10 form the catalytic core, while GID4, MKLN1, ARMC8 and YPEL5 have ancillary roles.

The protein localises to the nucleus. Its subcellular location is the nucleoplasm. It is found in the cytoplasm. The enzyme catalyses S-ubiquitinyl-[E2 ubiquitin-conjugating enzyme]-L-cysteine + [acceptor protein]-L-lysine = [E2 ubiquitin-conjugating enzyme]-L-cysteine + N(6)-ubiquitinyl-[acceptor protein]-L-lysine.. Functionally, core component of the CTLH E3 ubiquitin-protein ligase complex that selectively accepts ubiquitin from UBE2H and mediates ubiquitination and subsequent proteasomal degradation of the transcription factor HBP1. MAEA and RMND5A are both required for catalytic activity of the CTLH E3 ubiquitin-protein ligase complex. Catalytic activity of the complex is required for normal cell proliferation. The CTLH E3 ubiquitin-protein ligase complex is not required for the degradation of enzymes involved in gluconeogenesis, such as FBP1. In Mus musculus (Mouse), this protein is E3 ubiquitin-protein ligase RMND5A (Rmnd5a).